Here is a 147-residue protein sequence, read N- to C-terminus: UPF0178 protein Tgr7_2584 (147 aa).

It belongs to the UPF0178 family.

This is UPF0178 protein Tgr7_2584 from Thioalkalivibrio sulfidiphilus (strain HL-EbGR7).